Here is a 351-residue protein sequence, read N- to C-terminus: Beta-hexosaminidase (351 aa).

Substrate-binding positions include D62, R70, R134, and 164–165; that span reads KH. H177 serves as the catalytic Proton donor/acceptor. D249 serves as the catalytic Nucleophile.

Belongs to the glycosyl hydrolase 3 family. NagZ subfamily.

The protein localises to the cytoplasm. The enzyme catalyses Hydrolysis of terminal non-reducing N-acetyl-D-hexosamine residues in N-acetyl-beta-D-hexosaminides.. It functions in the pathway cell wall biogenesis; peptidoglycan recycling. In terms of biological role, plays a role in peptidoglycan recycling by cleaving the terminal beta-1,4-linked N-acetylglucosamine (GlcNAc) from peptide-linked peptidoglycan fragments, giving rise to free GlcNAc, anhydro-N-acetylmuramic acid and anhydro-N-acetylmuramic acid-linked peptides. This is Beta-hexosaminidase from Histophilus somni (strain 129Pt) (Haemophilus somnus).